A 342-amino-acid polypeptide reads, in one-letter code: MLDPRLSVAPMVDRTDRHFRFLVRQVSLGVRLYTEMTVDQAVLRGNRERLLAFRPEEHPIALQLAGSDPKSLAEAARIGEAFGYDEINLNLGCPSEKAQEGGYGACLLLDLARVREILKAMGEAVRVPVTVKMRLGLEGKETYRGLAQSVEAMAEAGVKVFVVHARSALLALSTKANREIPPLRHDWVHRLKGDFPQLTFVTNGGIRSLEEALFHLKRVDGVMLGRAVYEDPFVLEEADRRVFGLPRRPSRLEVARRMRAYLEEEVLKGTPPWAVLRHMLNLFRGRPKGRLWRRLLSEGRSLQALDRALRLMEEEVGEEGEKEKPGPRGQREAAPGPAREGV.

Residues 10–12 (PMV) and Q63 contribute to the FMN site. Catalysis depends on C93, which acts as the Proton donor. Residues K132, H164, 203-205 (NGG), and 225-226 (GR) each bind FMN. Basic and acidic residues predominate over residues 313–331 (EEEVGEEGEKEKPGPRGQR). The tract at residues 313 to 342 (EEEVGEEGEKEKPGPRGQREAAPGPAREGV) is disordered.

Belongs to the Dus family. DusA subfamily. FMN is required as a cofactor.

The catalysed reaction is 5,6-dihydrouridine(20) in tRNA + NADP(+) = uridine(20) in tRNA + NADPH + H(+). It carries out the reaction 5,6-dihydrouridine(20) in tRNA + NAD(+) = uridine(20) in tRNA + NADH + H(+). The enzyme catalyses 5,6-dihydrouridine(20a) in tRNA + NADP(+) = uridine(20a) in tRNA + NADPH + H(+). It catalyses the reaction 5,6-dihydrouridine(20a) in tRNA + NAD(+) = uridine(20a) in tRNA + NADH + H(+). Functionally, catalyzes the synthesis of 5,6-dihydrouridine (D), a modified base found in the D-loop of most tRNAs, via the reduction of the C5-C6 double bond in target uridines. Specifically modifies U20 and U20a in tRNAs. This Thermus thermophilus (strain ATCC 27634 / DSM 579 / HB8) protein is tRNA-dihydrouridine(20/20a) synthase (dus).